The chain runs to 67 residues: Large ribosomal subunit protein bL35 (67 aa).

Residues 1-20 (MPKLKTKSGAKKRFVPKKSG) form a disordered region.

This sequence belongs to the bacterial ribosomal protein bL35 family.

This Anaeromyxobacter dehalogenans (strain 2CP-C) protein is Large ribosomal subunit protein bL35.